The primary structure comprises 492 residues: Beta-Ala-His dipeptidase (492 aa).

Residue His-107 coordinates Zn(2+). Asp-109 is a catalytic residue. Asp-140 contacts Zn(2+). Glu-174 (proton acceptor) is an active-site residue. Glu-175 is a binding site for Zn(2+). A Phosphoserine modification is found at Ser-194. The Zn(2+) site is built by Asp-203 and His-453.

This sequence belongs to the peptidase M20A family. Homodimer. It depends on Zn(2+) as a cofactor. As to expression, detected exclusively in kidney.

The protein localises to the secreted. It catalyses the reaction Preferential hydrolysis of the beta-Ala-|-His dipeptide (carnosine), and also anserine, Xaa-|-His dipeptides and other dipeptides including homocarnosine.. The catalysed reaction is carnosine + H2O = beta-alanine + L-histidine. The enzyme catalyses anserine + H2O = N(pros)-methyl-L-histidine + beta-alanine. It carries out the reaction L-alanyl-L-histidine + H2O = L-histidine + L-alanine. It catalyses the reaction glycyl-L-histidine + H2O = L-histidine + glycine. The catalysed reaction is L-homocarnosine + H2O = 4-aminobutanoate + L-histidine. Its function is as follows. Catalyzes the peptide bond hydrolysis in Xaa-His dipeptides, displaying the highest activity toward carnosine (beta-alanyl-L-histidine) and anserine (beta-alanyl-3-methyl-histidine). The protein is Beta-Ala-His dipeptidase (Cndp1) of Mus musculus (Mouse).